A 207-amino-acid chain; its full sequence is 3-demethoxyubiquinol 3-hydroxylase (207 aa).

Fe cation-binding residues include E56, E86, H89, E138, E170, and H173.

It belongs to the COQ7 family. It depends on Fe cation as a cofactor.

Its subcellular location is the cell membrane. The catalysed reaction is a 5-methoxy-2-methyl-3-(all-trans-polyprenyl)benzene-1,4-diol + AH2 + O2 = a 3-demethylubiquinol + A + H2O. The protein operates within cofactor biosynthesis; ubiquinone biosynthesis. In terms of biological role, catalyzes the hydroxylation of 2-nonaprenyl-3-methyl-6-methoxy-1,4-benzoquinol during ubiquinone biosynthesis. The polypeptide is 3-demethoxyubiquinol 3-hydroxylase (Dechloromonas aromatica (strain RCB)).